We begin with the raw amino-acid sequence, 918 residues long: Calcium-transporting ATPase type 2C member 1 (918 aa).

At 1–78 (MKVARFQKIP…EPLWKKYISQ (78 aa)) the chain is on the cytoplasmic side. Residues 79 to 95 (FKNPLIMLLLASAVISI) form a helical membrane-spanning segment. Residues 96 to 99 (LMRQ) are Extracellular-facing. The helical transmembrane segment at 100–121 (FDDAVSITVAIVIVVTVAFVQE) threads the bilayer. Residues 122–262 (YRSEKSLEEL…PKTPLQKSMD (141 aa)) are Cytoplasmic-facing. A helical membrane pass occupies residues 263–282 (LLGKQLSFYSFGIIGIIMLV). Residues 283–294 (GWLLGKDILEMF) lie on the Extracellular side of the membrane. The chain crosses the membrane as a helical span at residues 295-316 (TISVSLAVAAIPEGLPIVVTVT). Residues 317-699 (LALGVMRMVK…EGKGIYNNIK (383 aa)) lie on the Cytoplasmic side of the membrane. Asp349 (4-aspartylphosphate intermediate) is an active-site residue. Residues Asp643 and Asp647 each coordinate Mg(2+). A helical transmembrane segment spans residues 700–722 (NFVRFQLSTSIAALTLISLATLM). Residues 723–727 (NFPNP) are Extracellular-facing. Residues 728–751 (LNAMQILWINIIMDGPPAQSLGVE) form a helical membrane-spanning segment. Over 752 to 775 (PVDKDVIRKPPRNWKDSILTKNLI) the chain is Cytoplasmic. Residues 776–794 (LKILVSSIIIVCGTLFVFW) form a helical membrane-spanning segment. Topologically, residues 795–801 (RELRDNV) are extracellular. A helical transmembrane segment spans residues 802–827 (ITPRDTTMTFTCFVFFDMFNALSSRS). Residues 828-842 (QTKSVFEIGLCSNKM) lie on the Cytoplasmic side of the membrane. Residues 843 to 862 (FCYAVLGSIMGQLLVIYFPP) traverse the membrane as a helical segment. At 863-875 (LQKVFQTESLSIL) the chain is on the extracellular side. Residues 876-892 (DLLFLLGLTSSVCIVSE) form a helical membrane-spanning segment. Topologically, residues 893-918 (IIKKVERSREKVQKNAGSASSSFLEV) are cytoplasmic.

This sequence belongs to the cation transport ATPase (P-type) (TC 3.A.3) family. Type IIA subfamily. In terms of assembly, monomer. Homodimer. In terms of tissue distribution, expressed in hippocampal neurons in the CA3 region of the Amon's horn (at protein level). Expressed in brain, heart, lung, stomach, liver, colon and mammary gland.

The protein resides in the golgi apparatus. It is found in the trans-Golgi network membrane. It localises to the golgi stack membrane. The enzyme catalyses Ca(2+)(in) + ATP + H2O = Ca(2+)(out) + ADP + phosphate + H(+). The catalysed reaction is Mn(2+)(in) + ATP + H2O = Mn(2+)(out) + ADP + phosphate + H(+). Functionally, ATP-driven pump that supplies the Golgi apparatus with Ca(2+) and Mn(2+) ions, both essential cofactors for processing and trafficking of newly synthesized proteins in the secretory pathway. Within a catalytic cycle, acquires Ca(2+) or Mn(2+) ions on the cytoplasmic side of the membrane and delivers them to the lumenal side. The transfer of ions across the membrane is coupled to ATP hydrolysis and is associated with a transient phosphorylation that shifts the pump conformation from inward-facing to outward-facing state. Plays a primary role in the maintenance of Ca(2+) homeostasis in the trans-Golgi compartment with a functional impact on Golgi and post-Golgi protein sorting as well as a structural impact on cisternae morphology. Responsible for loading the Golgi stores with Ca(2+) ions in keratinocytes, contributing to keratinocyte differentiation and epidermis integrity. Participates in Ca(2+) and Mn(2+) ions uptake into the Golgi store of hippocampal neurons and regulates protein trafficking required for neural polarity. May also play a role in the maintenance of Ca(2+) and Mn(2+) homeostasis and signaling in the cytosol while preventing cytotoxicity. The sequence is that of Calcium-transporting ATPase type 2C member 1 from Mus musculus (Mouse).